The sequence spans 45 residues: MDYKFLAGFALGFSSAIPFSVAGLYFVYLKISSHVRSIVNEYGRG.

Residues 9–29 traverse the membrane as a helical segment; the sequence is FALGFSSAIPFSVAGLYFVYL.

This sequence belongs to the polerovirus movement protein P3a family. As to quaternary structure, homodimer. Heterodimer with movement protein P17.

It localises to the host cell junction. The protein resides in the host plasmodesma. It is found in the host Golgi apparatus. The protein localises to the host chloroplast envelope. Its subcellular location is the host mitochondrion outer membrane. Functionally, together with movement protein P17, plays an essential role in virus long distance movement. The polypeptide is Movement protein P3a (ORF3a) (Solanum tuberosum (Potato)).